We begin with the raw amino-acid sequence, 188 residues long: Ribosome maturation factor RimM (188 aa).

The 75-residue stretch at 103–177 folds into the PRC barrel domain; the sequence is EEGWYYADLI…RVVIDPPAGT (75 aa).

The protein belongs to the RimM family. Binds ribosomal protein uS19.

It is found in the cytoplasm. Functionally, an accessory protein needed during the final step in the assembly of 30S ribosomal subunit, possibly for assembly of the head region. Essential for efficient processing of 16S rRNA. May be needed both before and after RbfA during the maturation of 16S rRNA. It has affinity for free ribosomal 30S subunits but not for 70S ribosomes. The sequence is that of Ribosome maturation factor RimM from Parvibaculum lavamentivorans (strain DS-1 / DSM 13023 / NCIMB 13966).